Consider the following 388-residue polypeptide: Succinate--CoA ligase [ADP-forming] subunit beta (388 aa).

One can recognise an ATP-grasp domain in the interval 9 to 244 (KEIFRSMGVA…LEEEDPKEIE (236 aa)). Residues Lys-46, 53 to 55 (GRG), Glu-99, Cys-102, and Glu-107 each bind ATP. Mg(2+) contacts are provided by Asn-199 and Asp-213. Residues Asn-264 and 321–323 (GIM) contribute to the substrate site.

It belongs to the succinate/malate CoA ligase beta subunit family. In terms of assembly, heterotetramer of two alpha and two beta subunits. Mg(2+) is required as a cofactor.

The catalysed reaction is succinate + ATP + CoA = succinyl-CoA + ADP + phosphate. The enzyme catalyses GTP + succinate + CoA = succinyl-CoA + GDP + phosphate. The protein operates within carbohydrate metabolism; tricarboxylic acid cycle; succinate from succinyl-CoA (ligase route): step 1/1. Functionally, succinyl-CoA synthetase functions in the citric acid cycle (TCA), coupling the hydrolysis of succinyl-CoA to the synthesis of either ATP or GTP and thus represents the only step of substrate-level phosphorylation in the TCA. The beta subunit provides nucleotide specificity of the enzyme and binds the substrate succinate, while the binding sites for coenzyme A and phosphate are found in the alpha subunit. The polypeptide is Succinate--CoA ligase [ADP-forming] subunit beta (Staphylococcus aureus (strain bovine RF122 / ET3-1)).